The sequence spans 645 residues: 1,4-alpha-glucan branching enzyme GlgB (645 aa).

The Nucleophile role is filled by Asp-309. The active-site Proton donor is Glu-352. The disordered stretch occupies residues 619-645 (VKTRKGSKKQDGSKTKVRSNVTSRGKR). A compositionally biased stretch (polar residues) spans 636 to 645 (RSNVTSRGKR).

It belongs to the glycosyl hydrolase 13 family. GlgB subfamily. As to quaternary structure, monomer.

The catalysed reaction is Transfers a segment of a (1-&gt;4)-alpha-D-glucan chain to a primary hydroxy group in a similar glucan chain.. It participates in glycan biosynthesis; glycogen biosynthesis. Catalyzes the formation of the alpha-1,6-glucosidic linkages in glycogen by scission of a 1,4-alpha-linked oligosaccharide from growing alpha-1,4-glucan chains and the subsequent attachment of the oligosaccharide to the alpha-1,6 position. The chain is 1,4-alpha-glucan branching enzyme GlgB from Bacillus cereus (strain ATCC 14579 / DSM 31 / CCUG 7414 / JCM 2152 / NBRC 15305 / NCIMB 9373 / NCTC 2599 / NRRL B-3711).